Here is a 547-residue protein sequence, read N- to C-terminus: Chaperonin GroEL (547 aa).

Residues 30-33, Lys-51, 87-91, Gly-415, and Asp-496 contribute to the ATP site; these read TLGP and DGTTT.

It belongs to the chaperonin (HSP60) family. In terms of assembly, forms a cylinder of 14 subunits composed of two heptameric rings stacked back-to-back. Interacts with the co-chaperonin GroES.

It localises to the cytoplasm. The enzyme catalyses ATP + H2O + a folded polypeptide = ADP + phosphate + an unfolded polypeptide.. Its function is as follows. Together with its co-chaperonin GroES, plays an essential role in assisting protein folding. The GroEL-GroES system forms a nano-cage that allows encapsulation of the non-native substrate proteins and provides a physical environment optimized to promote and accelerate protein folding. The chain is Chaperonin GroEL from Actinobacillus pleuropneumoniae (Haemophilus pleuropneumoniae).